Here is a 367-residue protein sequence, read N- to C-terminus: Lysophosphatidic acid receptor 5 (367 aa).

Over 1 to 25 (MQANSSAKSLPTECPDYQPIHHLHL) the chain is Extracellular. N4 is a glycosylation site (N-linked (GlcNAc...) asparagine). Residues 26–46 (VVYSVVLAAGLPLNALALWVF) traverse the membrane as a helical segment. Topologically, residues 47–54 (LRALRVHS) are cytoplasmic. Residues 55–75 (VVSVYMCNLAASDLLFTLSLP) form a helical membrane-spanning segment. Residues 76–95 (LRLSYYARHYWPFPDFLCQL) are Extracellular-facing. A disulfide bond links C93 and C174. Residues 96-116 (AGAVFQMNMYGSCIFLTLINV) form a helical membrane-spanning segment. At 117 to 135 (DRYAAIVHPLRLRHLRRPR) the chain is on the cytoplasmic side. A helical transmembrane segment spans residues 136-156 (VARLLCLGVWALILVFAVPTI). Topologically, residues 157–186 (LAHQPSSCARDGRNVSLCFESFSDKLWKGS) are extracellular. An N-linked (GlcNAc...) asparagine glycan is attached at N170. The helical transmembrane segment at 187 to 207 (LLPLLLLAEALGFLLPLAAVV) threads the bilayer. Topologically, residues 208-238 (YSSGRVFWTLARPDATRSQRRRKTVRLLLAS) are cytoplasmic. Residues 239-259 (LVIFLLCFVPYNATLAVYGLL) form a helical membrane-spanning segment. Topologically, residues 260-275 (RGEVVPASSEARKKVR) are extracellular. Residues 276–296 (GVLMVMVLLAGANCVLDPLVY) form a helical membrane-spanning segment. At 297 to 367 (YFSAEGFRNT…FTPSHEDSSF (71 aa)) the chain is on the cytoplasmic side. Residues 332-350 (LTETAHASTLTTTSQGQLQ) are compositionally biased toward low complexity. The tract at residues 332 to 367 (LTETAHASTLTTTSQGQLQPSDPRSSFTPSHEDSSF) is disordered. Positions 351-360 (PSDPRSSFTP) are enriched in polar residues.

This sequence belongs to the G-protein coupled receptor 1 family.

The protein resides in the cell membrane. Its function is as follows. Receptor for lysophosphatidic acid (LPA), a mediator of diverse cellular activities. The sequence is that of Lysophosphatidic acid receptor 5 (LPAR5) from Bos taurus (Bovine).